The sequence spans 448 residues: N-succinylarginine dihydrolase (448 aa).

Residues 19–28 (AGLSSGNIAS), Asn110, and 137–138 (HR) each bind substrate. Glu174 is a catalytic residue. Arg216 provides a ligand contact to substrate. The active site involves His252. Residues Asp254 and Asn366 each contribute to the substrate site. Cys372 (nucleophile) is an active-site residue.

This sequence belongs to the succinylarginine dihydrolase family. In terms of assembly, homodimer.

The enzyme catalyses N(2)-succinyl-L-arginine + 2 H2O + 2 H(+) = N(2)-succinyl-L-ornithine + 2 NH4(+) + CO2. It participates in amino-acid degradation; L-arginine degradation via AST pathway; L-glutamate and succinate from L-arginine: step 2/5. Its function is as follows. Catalyzes the hydrolysis of N(2)-succinylarginine into N(2)-succinylornithine, ammonia and CO(2). This is N-succinylarginine dihydrolase from Legionella pneumophila (strain Lens).